Reading from the N-terminus, the 228-residue chain is Cytidylate kinase (228 aa).

11 to 19 (GPAGTGKSS) contributes to the ATP binding site.

The protein belongs to the cytidylate kinase family. Type 1 subfamily.

It localises to the cytoplasm. The enzyme catalyses CMP + ATP = CDP + ADP. The catalysed reaction is dCMP + ATP = dCDP + ADP. This is Cytidylate kinase from Mycobacterium avium (strain 104).